The primary structure comprises 709 residues: Pentatricopeptide repeat-containing protein At5g42310, chloroplastic (709 aa).

Residues 1-54 (MLLLQQPPLVSTRFHSLYFLTHHHHHHHRFFQPPISAFSATTSASLPSPSPSSS) constitute a chloroplast transit peptide. PPR repeat units lie at residues 196 to 230 (TPLT…GYQS), 231 to 267 (DFVN…KLEL), 268 to 302 (DVQL…GLSA), 303 to 337 (KTAT…GIKP), 338 to 372 (RTRA…GVSP), 373 to 407 (DEHT…DVQP), 408 to 442 (NSFV…GVKP), 443 to 477 (DRQF…GIEP), 478 to 512 (DRVT…GCLP), 513 to 547 (CATT…GILP), 548 to 582 (NVVT…GLKP), 583 to 617 (SSTM…GLKP), 618 to 652 (SLLA…GVKP), and 653 to 687 (DVVT…GCKP).

The protein belongs to the PPR family. P subfamily. Interacts with PDE338.

It localises to the plastid. Its subcellular location is the chloroplast stroma. It is found in the chloroplast thylakoid. The protein localises to the chloroplast. Its function is as follows. Required for chloroplast protein synthesis and accumulation of subunits of the thylakoid protein complexes. Activates psaC and petA translation by binding their 5'-UTRs. Required for the correct processing of petB and petD mRNAs. Interacts with the petB and petD intergenic region and is required for the generation of petB and petD monocistronic RNAs. The chain is Pentatricopeptide repeat-containing protein At5g42310, chloroplastic from Arabidopsis thaliana (Mouse-ear cress).